We begin with the raw amino-acid sequence, 49 residues long: Osteocalcin (49 aa).

Pyrrolidone carboxylic acid is present on Q1. The 47-residue stretch at 1-47 (QLINGQGAPAPYPDPLEPKREVCELNPDCDELADQVGLQDAYQRFYG) folds into the Gla domain. P9 bears the 4-hydroxyproline mark. The Ca(2+) site is built by E17, E21, E24, and D30. Residues E17, E21, and E24 each carry the 4-carboxyglutamate modification. C23 and C29 are oxidised to a cystine.

Belongs to the osteocalcin/matrix Gla protein family. In terms of processing, gamma-carboxyglutamate residues are formed by vitamin K dependent carboxylation by GGCX. These residues are essential for the binding of calcium. Decarboxylation promotes the hormone activity.

The protein localises to the secreted. The carboxylated form is one of the main organic components of the bone matrix, which constitutes 1-2% of the total bone protein: it acts as a negative regulator of bone formation and is required to limit bone formation without impairing bone resorption or mineralization. The carboxylated form binds strongly to apatite and calcium. Functionally, the uncarboxylated form acts as a hormone secreted by osteoblasts, which regulates different cellular processes, such as energy metabolism, male fertility and brain development. Regulates of energy metabolism by acting as a hormone favoring pancreatic beta-cell proliferation, insulin secretion and sensitivity and energy expenditure. Uncarboxylated osteocalcin hormone also promotes testosterone production in the testes: acts as a ligand for G protein-coupled receptor GPRC6A at the surface of Leydig cells, initiating a signaling response that promotes the expression of enzymes required for testosterone synthesis in a CREB-dependent manner. Also acts as a regulator of brain development: osteocalcin hormone crosses the blood-brain barrier and acts as a ligand for GPR158 on neurons, initiating a signaling response that prevents neuronal apoptosis in the hippocampus, favors the synthesis of all monoamine neurotransmitters and inhibits that of gamma-aminobutyric acid (GABA). Osteocalcin also crosses the placenta during pregnancy and maternal osteocalcin is required for fetal brain development. The polypeptide is Osteocalcin (BGLAP) (Oryctolagus cuniculus (Rabbit)).